The chain runs to 286 residues: Probable aquaporin-3 (286 aa).

The segment at 1–34 (MADTYGMNGHNGHVKDRRSSSMNGRNRLYAQQEP) is disordered. Residues 1 to 52 (MADTYGMNGHNGHVKDRRSSSMNGRNRLYAQQEPQRTTHLSEFGKHMVAASG) lie on the Cytoplasmic side of the membrane. A helical membrane pass occupies residues 53–73 (EFVGTFLFLYFGYAGNIVAVL). The Extracellular segment spans residues 74–87 (QEPISGPNGTLANN). N-linked (GlcNAc...) asparagine glycans are attached at residues Asn-81 and Asn-86. The helical transmembrane segment at 88 to 108 (TVMYIAMAYGFSLLVNVWTFY) threads the bilayer. Residues 109–135 (RISGGLFNPAVTFGLCLSGQLPWIRAL) are Cytoplasmic-facing. The NPA 1 motif lies at 116–118 (NPA). Residues 136-156 (FLFPSQIIAAMCAGGLVNAMF) form a helical membrane-spanning segment. At 157 to 175 (PGSASIANTTLGPNTSIAQ) the chain is on the extracellular side. N-linked (GlcNAc...) asparagine glycosylation is found at Asn-164 and Asn-170. A helical transmembrane segment spans residues 176 to 196 (GVFLEMFFTAQLVFVVLMLAA). The Cytoplasmic portion of the chain corresponds to 197-202 (EKSRDT). The helical transmembrane segment at 203–223 (FLAPVGIGLALFVALIPGVFV) threads the bilayer. The Extracellular portion of the chain corresponds to 224-244 (TGGSANPVRSFGCAVGSRDFP). The short motif at 229-231 (NPV) is the NPA 2 element. The chain crosses the membrane as a helical span at residues 245–265 (GYHWIYWVGPLLGAALAAGYF). Residues 266-286 (RLVKMMHYEEANPGQDSPVDV) lie on the Cytoplasmic side of the membrane.

The protein belongs to the MIP/aquaporin (TC 1.A.8) family.

It is found in the membrane. It carries out the reaction H2O(in) = H2O(out). Its function is as follows. Probable water channel that may have redundant functions with FgAQP5. This is Probable aquaporin-3 from Gibberella zeae (strain ATCC MYA-4620 / CBS 123657 / FGSC 9075 / NRRL 31084 / PH-1) (Wheat head blight fungus).